A 155-amino-acid polypeptide reads, in one-letter code: Small ribosomal subunit protein uS7c (155 aa).

The protein belongs to the universal ribosomal protein uS7 family. As to quaternary structure, part of the 30S ribosomal subunit.

The protein resides in the plastid. Its subcellular location is the chloroplast. Functionally, one of the primary rRNA binding proteins, it binds directly to 16S rRNA where it nucleates assembly of the head domain of the 30S subunit. In Schisandra chinensis (Chinese magnolia vine), this protein is Small ribosomal subunit protein uS7c (rps7).